The following is a 463-amino-acid chain: Phosphoglucosamine mutase (463 aa).

Ser-101 acts as the Phosphoserine intermediate in catalysis. Positions 101, 256, 258, and 260 each coordinate Mg(2+). Ser-101 carries the phosphoserine modification.

Belongs to the phosphohexose mutase family. Mg(2+) is required as a cofactor. In terms of processing, activated by phosphorylation.

The enzyme catalyses alpha-D-glucosamine 1-phosphate = D-glucosamine 6-phosphate. Catalyzes the conversion of glucosamine-6-phosphate to glucosamine-1-phosphate. The protein is Phosphoglucosamine mutase of Desulforapulum autotrophicum (strain ATCC 43914 / DSM 3382 / VKM B-1955 / HRM2) (Desulfobacterium autotrophicum).